A 142-amino-acid chain; its full sequence is Hemoglobin subunit theta-1 (142 aa).

A Globin domain is found at 2 to 142 (ALSAEDRALV…VISALVSEYR (141 aa)). Heme b-binding residues include His-59 and His-88.

The protein belongs to the globin family.

The polypeptide is Hemoglobin subunit theta-1 (HBQ1) (Homo sapiens (Human)).